A 299-amino-acid polypeptide reads, in one-letter code: Transcription termination/antitermination protein NusG (299 aa).

The interval 30-96 is disordered; the sequence is DPDEAELADA…APVEPAEPVD (67 aa). 2 consecutive repeat copies span residues 46–49 and 70–73. Positions 46–87 are 4 X 4 AA repeats of E-E-A-A; sequence EEAALHVESDEDEDEADVEVDAAVEEAADDAEVAEEEAEEAA. Residues 54–87 are compositionally biased toward acidic residues; sequence SDEDEDEADVEVDAAVEEAADDAEVAEEEAEEAA. A 3; approximate repeat occupies 80 to 83; it reads EEEA. Repeat unit 4 spans residues 84-87; the sequence is EEAA. The KOW domain occupies 248–276; sequence VGDSVTVTDGPFATLQATINEINPDSKKV.

This sequence belongs to the NusG family. In terms of processing, the N-terminus is blocked.

Participates in transcription elongation, termination and antitermination. The sequence is that of Transcription termination/antitermination protein NusG from Streptomyces virginiae (Streptomyces cinnamonensis).